Reading from the N-terminus, the 251-residue chain is Ribosomal RNA small subunit methyltransferase J (251 aa).

Residues 100-101, 116-117, and D170 each bind S-adenosyl-L-methionine; these read RD and ER.

The protein belongs to the methyltransferase superfamily. RsmJ family.

It localises to the cytoplasm. It carries out the reaction guanosine(1516) in 16S rRNA + S-adenosyl-L-methionine = N(2)-methylguanosine(1516) in 16S rRNA + S-adenosyl-L-homocysteine + H(+). In terms of biological role, specifically methylates the guanosine in position 1516 of 16S rRNA. This Haemophilus ducreyi (strain 35000HP / ATCC 700724) protein is Ribosomal RNA small subunit methyltransferase J.